Here is a 58-residue protein sequence, read N- to C-terminus: UPF0391 membrane protein GM21_0108 (58 aa).

The next 2 membrane-spanning stretches (helical) occupy residues 4-24 (WALIFFIIAIIAAVFGFGGIA) and 33-53 (VLFYLFLVVAVVMLVSALLAG).

Belongs to the UPF0391 family.

It localises to the cell membrane. The sequence is that of UPF0391 membrane protein GM21_0108 from Geobacter sp. (strain M21).